Reading from the N-terminus, the 425-residue chain is Histidine--tRNA ligase (425 aa).

It belongs to the class-II aminoacyl-tRNA synthetase family. As to quaternary structure, homodimer.

It localises to the cytoplasm. The enzyme catalyses tRNA(His) + L-histidine + ATP = L-histidyl-tRNA(His) + AMP + diphosphate + H(+). The sequence is that of Histidine--tRNA ligase from Pelotomaculum thermopropionicum (strain DSM 13744 / JCM 10971 / SI).